The chain runs to 174 residues: Shikimate kinase 2 (174 aa).

Residue 12–17 participates in ATP binding; the sequence is GCGKTT. Mg(2+) is bound by residues Thr16 and Asp32. Positions 34, 58, and 79 each coordinate substrate. The segment at 112–126 is LID domain; sequence EAFPEEGQRPTLTGK. Arg120 serves as a coordination point for ATP. Position 139 (Arg139) interacts with substrate. Gln155 lines the ATP pocket.

Belongs to the shikimate kinase family. AroL subfamily. As to quaternary structure, monomer. Mg(2+) serves as cofactor.

The protein resides in the cytoplasm. It carries out the reaction shikimate + ATP = 3-phosphoshikimate + ADP + H(+). It functions in the pathway metabolic intermediate biosynthesis; chorismate biosynthesis; chorismate from D-erythrose 4-phosphate and phosphoenolpyruvate: step 5/7. Functionally, catalyzes the specific phosphorylation of the 3-hydroxyl group of shikimic acid using ATP as a cosubstrate. This is Shikimate kinase 2 from Enterobacter sp. (strain 638).